The following is a 274-amino-acid chain: Proteasome subunit beta (274 aa).

Residues 1–52 constitute a propeptide, removed in mature form; by autocatalysis; it reads MADPLGAAGRLPAVFMTPGTSSFADFLSRSAPHLLPGARSGLPGPVTEVAHG. T53 serves as the catalytic Nucleophile.

The protein belongs to the peptidase T1B family. The 20S proteasome core is composed of 14 alpha and 14 beta subunits that assemble into four stacked heptameric rings, resulting in a barrel-shaped structure. The two inner rings, each composed of seven catalytic beta subunits, are sandwiched by two outer rings, each composed of seven alpha subunits. The catalytic chamber with the active sites is on the inside of the barrel. Has a gated structure, the ends of the cylinder being occluded by the N-termini of the alpha-subunits. Is capped by the proteasome-associated ATPase, ARC.

The protein localises to the cytoplasm. The enzyme catalyses Cleavage of peptide bonds with very broad specificity.. The protein operates within protein degradation; proteasomal Pup-dependent pathway. With respect to regulation, the formation of the proteasomal ATPase ARC-20S proteasome complex, likely via the docking of the C-termini of ARC into the intersubunit pockets in the alpha-rings, may trigger opening of the gate for substrate entry. Interconversion between the open-gate and close-gate conformations leads to a dynamic regulation of the 20S proteasome proteolysis activity. Component of the proteasome core, a large protease complex with broad specificity involved in protein degradation. This chain is Proteasome subunit beta, found in Frankia casuarinae (strain DSM 45818 / CECT 9043 / HFP020203 / CcI3).